We begin with the raw amino-acid sequence, 155 residues long: Cytochrome c-type biogenesis protein CcmE (155 aa).

The Cytoplasmic segment spans residues M1 to R7. The chain crosses the membrane as a helical; Signal-anchor for type II membrane protein span at residues L8–A28. Over F29–P155 the chain is Periplasmic. 2 residues coordinate heme: H124 and Y128.

It belongs to the CcmE/CycJ family.

The protein localises to the cell inner membrane. Heme chaperone required for the biogenesis of c-type cytochromes. Transiently binds heme delivered by CcmC and transfers the heme to apo-cytochromes in a process facilitated by CcmF and CcmH. The protein is Cytochrome c-type biogenesis protein CcmE of Rhizobium etli (strain ATCC 51251 / DSM 11541 / JCM 21823 / NBRC 15573 / CFN 42).